Here is a 620-residue protein sequence, read N- to C-terminus: 1-deoxy-D-xylulose-5-phosphate synthase (620 aa).

Thiamine diphosphate is bound by residues histidine 80 and 121 to 123 (GHS). Position 152 (aspartate 152) interacts with Mg(2+). Thiamine diphosphate is bound by residues 153-154 (GA), asparagine 181, tyrosine 288, and glutamate 370. Asparagine 181 is a Mg(2+) binding site.

This sequence belongs to the transketolase family. DXPS subfamily. In terms of assembly, homodimer. Requires Mg(2+) as cofactor. Thiamine diphosphate serves as cofactor.

It carries out the reaction D-glyceraldehyde 3-phosphate + pyruvate + H(+) = 1-deoxy-D-xylulose 5-phosphate + CO2. Its pathway is metabolic intermediate biosynthesis; 1-deoxy-D-xylulose 5-phosphate biosynthesis; 1-deoxy-D-xylulose 5-phosphate from D-glyceraldehyde 3-phosphate and pyruvate: step 1/1. Catalyzes the acyloin condensation reaction between C atoms 2 and 3 of pyruvate and glyceraldehyde 3-phosphate to yield 1-deoxy-D-xylulose-5-phosphate (DXP). The polypeptide is 1-deoxy-D-xylulose-5-phosphate synthase (Pseudoalteromonas translucida (strain TAC 125)).